A 153-amino-acid chain; its full sequence is Ribosome maturation factor RimP (153 aa).

The protein belongs to the RimP family.

It is found in the cytoplasm. Its function is as follows. Required for maturation of 30S ribosomal subunits. The sequence is that of Ribosome maturation factor RimP from Trichormus variabilis (strain ATCC 29413 / PCC 7937) (Anabaena variabilis).